Reading from the N-terminus, the 1128-residue chain is Translation initiation factor IF-2 (1128 aa).

Positions 57–519 are disordered; the sequence is NSDKQILSIN…KETTRQRQKR (463 aa). Residues 70–83 show a composition bias toward basic and acidic residues; the sequence is NKKDNYKQNKEDKS. The segment covering 100 to 110 has biased composition (low complexity); that stretch reads KKQLLNKPLNK. The span at 120 to 146 shows a compositional bias: polar residues; sequence QLKNPNKPNIYNSSQSQANLTNQNTKS. The span at 147-158 shows a compositional bias: basic and acidic residues; it reads KPSEHFNKDKKT. Over residues 182 to 196 the composition is skewed to low complexity; the sequence is KNINNNLKSNESSKN. Over residues 201 to 214 the composition is skewed to basic and acidic residues; the sequence is GDKRELSLKPDQNR. Polar residues-rich tracts occupy residues 243 to 267 and 386 to 397; these read KQNN…NRPG and AKTNNQKQNIES. Over residues 432–445 the composition is skewed to basic and acidic residues; sequence RKDWDDSAKLEALR. Residues 499 to 519 are compositionally biased toward basic residues; sequence HKSTKQFKKKKKETTRQRQKR. In terms of domain architecture, tr-type G spans 620-792; the sequence is KRPPVITVMG…ILLVSEVEDL (173 aa). The tract at residues 629 to 636 is G1; that stretch reads GHVDHGKT. 629–636 contributes to the GTP binding site; it reads GHVDHGKT. Positions 654–658 are G2; it reads GITQH. The interval 679–682 is G3; sequence DTPG. GTP-binding positions include 679–683 and 733–736; these read DTPGH and NKID. The segment at 733–736 is G4; the sequence is NKID. The interval 769-771 is G5; it reads SAI.

This sequence belongs to the TRAFAC class translation factor GTPase superfamily. Classic translation factor GTPase family. IF-2 subfamily.

It is found in the cytoplasm. Functionally, one of the essential components for the initiation of protein synthesis. Protects formylmethionyl-tRNA from spontaneous hydrolysis and promotes its binding to the 30S ribosomal subunits. Also involved in the hydrolysis of GTP during the formation of the 70S ribosomal complex. The sequence is that of Translation initiation factor IF-2 from Prochlorococcus marinus (strain MIT 9312).